Here is a 392-residue protein sequence, read N- to C-terminus: DNA replication and repair protein RecF (392 aa).

Residue 33–40 (GANGAGKT) participates in ATP binding.

Belongs to the RecF family.

Its subcellular location is the cytoplasm. In terms of biological role, the RecF protein is involved in DNA metabolism; it is required for DNA replication and normal SOS inducibility. RecF binds preferentially to single-stranded, linear DNA. It also seems to bind ATP. In Caulobacter sp. (strain K31), this protein is DNA replication and repair protein RecF.